Here is a 173-residue protein sequence, read N- to C-terminus: Insertion element IS150 protein InsJ (173 aa).

This sequence belongs to the IS150/IS1296 orfA family.

This is Insertion element IS150 protein InsJ (insJ) from Escherichia coli (strain K12).